The primary structure comprises 582 residues: Methionine--tRNA ligase (582 aa).

The short motif at 24–34 is the 'HIGH' region element; it reads PYIYAVPHLGN. Zn(2+) contacts are provided by cysteine 156, cysteine 159, cysteine 169, and cysteine 172. A 'KMSKS' region motif is present at residues 346–350; it reads KFSKS. Residue lysine 349 participates in ATP binding.

Belongs to the class-I aminoacyl-tRNA synthetase family. MetG type 1 subfamily. It depends on Zn(2+) as a cofactor.

It is found in the cytoplasm. The catalysed reaction is tRNA(Met) + L-methionine + ATP = L-methionyl-tRNA(Met) + AMP + diphosphate. Its function is as follows. Is required not only for elongation of protein synthesis but also for the initiation of all mRNA translation through initiator tRNA(fMet) aminoacylation. This chain is Methionine--tRNA ligase, found in Caldivirga maquilingensis (strain ATCC 700844 / DSM 13496 / JCM 10307 / IC-167).